The sequence spans 303 residues: Probable endonuclease 4 (303 aa).

The Zn(2+) site is built by His-78, His-118, Glu-154, Asp-188, His-191, His-222, Asp-235, His-237, and Glu-267.

Belongs to the AP endonuclease 2 family. Zn(2+) serves as cofactor.

The enzyme catalyses Endonucleolytic cleavage to 5'-phosphooligonucleotide end-products.. Functionally, endonuclease IV plays a role in DNA repair. It cleaves phosphodiester bonds at apurinic or apyrimidinic (AP) sites, generating a 3'-hydroxyl group and a 5'-terminal sugar phosphate. The sequence is that of Probable endonuclease 4 from Mycoplasmoides gallisepticum (strain R(low / passage 15 / clone 2)) (Mycoplasma gallisepticum).